The primary structure comprises 143 residues: Large ribosomal subunit protein uL15 (143 aa).

The segment at 1-51 (MRLNSIAPAPGSRPSAKRVGRGIGSGLGKTAGRGHKGQKARAGGYHKVGFE) is disordered. Residues 21-31 (RGIGSGLGKTA) show a composition bias toward gly residues.

The protein belongs to the universal ribosomal protein uL15 family. As to quaternary structure, part of the 50S ribosomal subunit.

Binds to the 23S rRNA. The protein is Large ribosomal subunit protein uL15 of Thioalkalivibrio sulfidiphilus (strain HL-EbGR7).